A 451-amino-acid polypeptide reads, in one-letter code: Chromosomal replication initiator protein DnaA (451 aa).

The domain I, interacts with DnaA modulators stretch occupies residues 1–72 (MQSIEDIWQE…ANILQEITGR (72 aa)). Positions 72-108 (RLFDVRFIDGEQEENFEYTVIKPNPALDEDGIEIGKH) are domain II. The domain III, AAA+ region stretch occupies residues 109–325 (MLNPRYVFDT…GALIRVVAYS (217 aa)). ATP contacts are provided by G153, G155, K156, and T157. Residues 326-451 (SLVNKDITAG…KNLRKSQNMF (126 aa)) form a domain IV, binds dsDNA region.

Belongs to the DnaA family. As to quaternary structure, oligomerizes as a right-handed, spiral filament on DNA at oriC.

Its subcellular location is the cytoplasm. Its function is as follows. Plays an essential role in the initiation and regulation of chromosomal replication. ATP-DnaA binds to the origin of replication (oriC) to initiate formation of the DNA replication initiation complex once per cell cycle. Binds the DnaA box (a 9 base pair repeat at the origin) and separates the double-stranded (ds)DNA. Forms a right-handed helical filament on oriC DNA; dsDNA binds to the exterior of the filament while single-stranded (ss)DNA is stabiized in the filament's interior. The ATP-DnaA-oriC complex binds and stabilizes one strand of the AT-rich DNA unwinding element (DUE), permitting loading of DNA polymerase. After initiation quickly degrades to an ADP-DnaA complex that is not apt for DNA replication. Binds acidic phospholipids. The sequence is that of Chromosomal replication initiator protein DnaA from Listeria welshimeri serovar 6b (strain ATCC 35897 / DSM 20650 / CCUG 15529 / CIP 8149 / NCTC 11857 / SLCC 5334 / V8).